The following is a 307-amino-acid chain: UDP-3-O-acyl-N-acetylglucosamine deacetylase (307 aa).

3 residues coordinate Zn(2+): H78, H241, and D245. H268 acts as the Proton donor in catalysis.

The protein belongs to the LpxC family. Zn(2+) serves as cofactor.

The catalysed reaction is a UDP-3-O-[(3R)-3-hydroxyacyl]-N-acetyl-alpha-D-glucosamine + H2O = a UDP-3-O-[(3R)-3-hydroxyacyl]-alpha-D-glucosamine + acetate. It functions in the pathway glycolipid biosynthesis; lipid IV(A) biosynthesis; lipid IV(A) from (3R)-3-hydroxytetradecanoyl-[acyl-carrier-protein] and UDP-N-acetyl-alpha-D-glucosamine: step 2/6. Catalyzes the hydrolysis of UDP-3-O-myristoyl-N-acetylglucosamine to form UDP-3-O-myristoylglucosamine and acetate, the committed step in lipid A biosynthesis. This chain is UDP-3-O-acyl-N-acetylglucosamine deacetylase, found in Bordetella bronchiseptica (strain ATCC BAA-588 / NCTC 13252 / RB50) (Alcaligenes bronchisepticus).